We begin with the raw amino-acid sequence, 132 residues long: D-ribose pyranase (132 aa).

Catalysis depends on histidine 20, which acts as the Proton donor. Residues aspartate 28, histidine 99, and 121 to 123 (YSN) contribute to the substrate site.

This sequence belongs to the RbsD / FucU family. RbsD subfamily. Homodecamer.

The protein resides in the cytoplasm. It catalyses the reaction beta-D-ribopyranose = beta-D-ribofuranose. Its pathway is carbohydrate metabolism; D-ribose degradation; D-ribose 5-phosphate from beta-D-ribopyranose: step 1/2. In terms of biological role, catalyzes the interconversion of beta-pyran and beta-furan forms of D-ribose. This chain is D-ribose pyranase, found in Streptococcus agalactiae serotype V (strain ATCC BAA-611 / 2603 V/R).